The chain runs to 149 residues: Small ribosomal subunit protein uS13 (149 aa).

The protein belongs to the universal ribosomal protein uS13 family. As to quaternary structure, part of the 30S ribosomal subunit. Forms a loose heterodimer with protein S19. Forms two bridges to the 50S subunit in the 70S ribosome.

Located at the top of the head of the 30S subunit, it contacts several helices of the 16S rRNA. In the 70S ribosome it contacts the 23S rRNA (bridge B1a) and protein L5 of the 50S subunit (bridge B1b), connecting the 2 subunits; these bridges are implicated in subunit movement. This is Small ribosomal subunit protein uS13 from Methanococcus maripaludis (strain DSM 14266 / JCM 13030 / NBRC 101832 / S2 / LL).